Here is a 264-residue protein sequence, read N- to C-terminus: tRNA (guanine-N(1)-)-methyltransferase (264 aa).

S-adenosyl-L-methionine contacts are provided by residues glycine 120 and isoleucine 140–leucine 145.

This sequence belongs to the RNA methyltransferase TrmD family. In terms of assembly, homodimer.

The protein localises to the cytoplasm. The enzyme catalyses guanosine(37) in tRNA + S-adenosyl-L-methionine = N(1)-methylguanosine(37) in tRNA + S-adenosyl-L-homocysteine + H(+). Functionally, specifically methylates guanosine-37 in various tRNAs. This chain is tRNA (guanine-N(1)-)-methyltransferase, found in Halorhodospira halophila (strain DSM 244 / SL1) (Ectothiorhodospira halophila (strain DSM 244 / SL1)).